We begin with the raw amino-acid sequence, 414 residues long: Cyclohex-1-ene-1-carbonyl-CoA dehydrogenase (414 aa).

Catalysis depends on Asp-124, which acts as the Proton acceptor. Residues Ala-157, Thr-158, Ser-164, and Thr-190 each contribute to the FAD site. Ser-164 serves as a coordination point for cyclohex-1-ene-1-carbonyl-CoA. Ser-164 is a binding site for cyclohexa-1,5-diene-1-carbonyl-CoA. 3 residues coordinate cyclohex-1-ene-1-carbonyl-CoA: Lys-211, Arg-275, and Thr-396. Positions 211, 275, and 396 each coordinate cyclohexa-1,5-diene-1-carbonyl-CoA. 2 residues coordinate FAD: Thr-398 and Gln-400. Arg-408 is a cyclohex-1-ene-1-carbonyl-CoA binding site. Arg-408 is a binding site for cyclohexa-1,5-diene-1-carbonyl-CoA.

The protein belongs to the acyl-CoA dehydrogenase family. As to quaternary structure, homotetramer. FAD serves as cofactor.

The catalysed reaction is cyclohex-1-ene-1-carbonyl-CoA + oxidized [electron-transfer flavoprotein] + H(+) = cyclohexa-1,5-diene-1-carbonyl-CoA + reduced [electron-transfer flavoprotein]. In terms of biological role, mediates the conversion of cyclohex-1-ene-1-carbonyl-CoA (Ch1CoA) into (E)-2-cyclohex-1,5-diene-1-carbonyl-CoA in biosynthesis of cyclohexane-1-carboxylate, a by-product produced during fermentation of benzoate and crotonate to acetate. Also able to further convert (E)-2-cyclohex-1,5-diene-1-carbonyl-CoA to benzoyl-CoA. The chain is Cyclohex-1-ene-1-carbonyl-CoA dehydrogenase from Syntrophus aciditrophicus (strain SB).